The following is a 352-amino-acid chain: Phosphoribosylformylglycinamidine cyclo-ligase (352 aa).

Belongs to the AIR synthase family.

The protein resides in the cytoplasm. The enzyme catalyses 2-formamido-N(1)-(5-O-phospho-beta-D-ribosyl)acetamidine + ATP = 5-amino-1-(5-phospho-beta-D-ribosyl)imidazole + ADP + phosphate + H(+). It functions in the pathway purine metabolism; IMP biosynthesis via de novo pathway; 5-amino-1-(5-phospho-D-ribosyl)imidazole from N(2)-formyl-N(1)-(5-phospho-D-ribosyl)glycinamide: step 2/2. This Stenotrophomonas maltophilia (strain K279a) protein is Phosphoribosylformylglycinamidine cyclo-ligase.